We begin with the raw amino-acid sequence, 91 residues long: Potassium channel toxin MeuTXK-beta-1 (91 aa).

A signal peptide spans 1–19 (MQRNLVVLLFLGMVALSSC). One can recognise a BetaSPN-type CS-alpha/beta domain in the interval 54–91 (QFGCPAYQGYCDDHCQDIEKKEGFCHGFKCKCGIPMGF). Intrachain disulfides connect C57-C78, C64-C83, and C68-C85.

In terms of tissue distribution, expressed by the venom gland.

It localises to the secreted. In terms of biological role, has a low affinity binding to potassium channels of rat brain synaptosomes. Displays weak antibacterial activity against Stenotrophomonas sp. Strongly inhibits the development of the Plasmodium berghei ookinetes. Displays slight hemolytic effect on mouse erythrocytes. Induces cytolysis on Xenopus oocytes at high concentrations. Is not toxic towards mice and towards the insect Tenebrio molitor. This is Potassium channel toxin MeuTXK-beta-1 from Mesobuthus eupeus (Lesser Asian scorpion).